The chain runs to 345 residues: Peptidoglycan-recognition protein LE (345 aa).

Positions 1-16 (MSESGIKKLSQERTRE) are enriched in basic and acidic residues. The segment at 1–38 (MSESGIKKLSQERTREWLASQEDEELESIAESSVVDSL) is disordered. Residues N52, N95, N98, and N106 are each glycosylated (N-linked (GlcNAc...) asparagine). Positions 124-152 (NRRDRRHVSPPRDNAPKTPTHFEDDYQDE) are disordered. Residues 198–324 (PVKYVVILHT…CQCNSTESPG (127 aa)) form the N-acetylmuramoyl-L-alanine amidase domain. Residues H206, 229–240 (HIESRGWNDIAY), R254, 261–267 (AHTLGYN), and 314–322 (HCQCNSTES) contribute to the peptidoglycan site. A glycan (N-linked (GlcNAc...) asparagine) is linked at N318.

This sequence belongs to the N-acetylmuramoyl-L-alanine amidase 2 family. In terms of assembly, monomer. Peptidoglycan binding induces oligomerization. Expressed in hemolymph. Localizes at the lumenal surface of the trachea (at protein level).

It localises to the secreted. Its function is as follows. Peptidoglycan-recognition protein that plays a key role in innate immunity by binding to murein peptidoglycans (PGN) of Gram-negative bacteria and activating the imd/Relish pathway. Has no activity against on Gram-positive bacteria. Binds to diaminopimelic acid-type PGN (DAP-type PGN), an activator of the imd/Relish pathway. Functions synergistically with PGRP-LC in producing resistance to E.coli and B.megaterium infections, which have the DAP-type peptidoglycan. Acts both upstream and in parallel with PGRP-LC in the imd/Relish pathway, and is required for infection-dependent activation of melanization. Required for Relish processing and nuclear translocation following proteolytic cleavage. Its localization suggests a role in the recognition and subsequent activation of the signaling at the first point of contact with invading bacteria. This is Peptidoglycan-recognition protein LE (PGRP-LE) from Drosophila melanogaster (Fruit fly).